The following is a 399-amino-acid chain: S-adenosylmethionine synthase (399 aa).

An ATP-binding site is contributed by His17. Asp19 contributes to the Mg(2+) binding site. Glu45 provides a ligand contact to K(+). L-methionine-binding residues include Glu58 and Gln101. The interval 101 to 111 is flexible loop; sequence QSPDIAQGVDE. Residues 177–179, 244–245, Asp253, 259–260, Ala276, and Lys280 each bind ATP; these read DAK, RF, and RK. An L-methionine-binding site is contributed by Asp253. Lys284 contributes to the L-methionine binding site.

The protein belongs to the AdoMet synthase family. Homotetramer; dimer of dimers. It depends on Mg(2+) as a cofactor. The cofactor is K(+).

It localises to the cytoplasm. It carries out the reaction L-methionine + ATP + H2O = S-adenosyl-L-methionine + phosphate + diphosphate. It participates in amino-acid biosynthesis; S-adenosyl-L-methionine biosynthesis; S-adenosyl-L-methionine from L-methionine: step 1/1. Its function is as follows. Catalyzes the formation of S-adenosylmethionine (AdoMet) from methionine and ATP. The overall synthetic reaction is composed of two sequential steps, AdoMet formation and the subsequent tripolyphosphate hydrolysis which occurs prior to release of AdoMet from the enzyme. This is S-adenosylmethionine synthase from Listeria monocytogenes serotype 4b (strain CLIP80459).